A 474-amino-acid chain; its full sequence is tRNA-2-methylthio-N(6)-dimethylallyladenosine synthase (474 aa).

The MTTase N-terminal domain occupies 3-120 (KKLHIKTWGC…LPEMINHVQG (118 aa)). [4Fe-4S] cluster is bound by residues Cys12, Cys49, Cys83, Cys157, Cys161, and Cys164. The Radical SAM core domain maps to 143-375 (RAEGPTAFVS…QQRISQQAME (233 aa)). The TRAM domain maps to 378-441 (RKMVGTVQRV…ASSLRGILLR (64 aa)).

This sequence belongs to the methylthiotransferase family. MiaB subfamily. Monomer. [4Fe-4S] cluster serves as cofactor.

It localises to the cytoplasm. The catalysed reaction is N(6)-dimethylallyladenosine(37) in tRNA + (sulfur carrier)-SH + AH2 + 2 S-adenosyl-L-methionine = 2-methylsulfanyl-N(6)-dimethylallyladenosine(37) in tRNA + (sulfur carrier)-H + 5'-deoxyadenosine + L-methionine + A + S-adenosyl-L-homocysteine + 2 H(+). Catalyzes the methylthiolation of N6-(dimethylallyl)adenosine (i(6)A), leading to the formation of 2-methylthio-N6-(dimethylallyl)adenosine (ms(2)i(6)A) at position 37 in tRNAs that read codons beginning with uridine. This is tRNA-2-methylthio-N(6)-dimethylallyladenosine synthase from Yersinia pseudotuberculosis serotype O:1b (strain IP 31758).